The chain runs to 309 residues: Aspartate carbamoyltransferase catalytic subunit (309 aa).

Carbamoyl phosphate contacts are provided by Arg54 and Thr55. Lys82 serves as a coordination point for L-aspartate. Residues Arg104, His132, and Gln135 each contribute to the carbamoyl phosphate site. 2 residues coordinate L-aspartate: Arg165 and Arg219. Carbamoyl phosphate is bound by residues Gly260 and Pro261.

It belongs to the aspartate/ornithine carbamoyltransferase superfamily. ATCase family. Heterododecamer (2C3:3R2) of six catalytic PyrB chains organized as two trimers (C3), and six regulatory PyrI chains organized as three dimers (R2).

It carries out the reaction carbamoyl phosphate + L-aspartate = N-carbamoyl-L-aspartate + phosphate + H(+). The protein operates within pyrimidine metabolism; UMP biosynthesis via de novo pathway; (S)-dihydroorotate from bicarbonate: step 2/3. Catalyzes the condensation of carbamoyl phosphate and aspartate to form carbamoyl aspartate and inorganic phosphate, the committed step in the de novo pyrimidine nucleotide biosynthesis pathway. The chain is Aspartate carbamoyltransferase catalytic subunit from Parafrankia sp. (strain EAN1pec).